A 204-amino-acid chain; its full sequence is UPF0301 protein Mflv_0850 (204 aa).

Belongs to the UPF0301 (AlgH) family.

In Mycolicibacterium gilvum (strain PYR-GCK) (Mycobacterium gilvum (strain PYR-GCK)), this protein is UPF0301 protein Mflv_0850.